A 325-amino-acid polypeptide reads, in one-letter code: Beta-ketoacyl-[acyl-carrier-protein] synthase III (325 aa).

Residues Cys-119 and His-252 contribute to the active site. An ACP-binding region spans residues 253–257 (QANIR). Asn-282 is an active-site residue.

The protein belongs to the thiolase-like superfamily. FabH family. Homodimer.

The protein resides in the cytoplasm. It carries out the reaction malonyl-[ACP] + acetyl-CoA + H(+) = 3-oxobutanoyl-[ACP] + CO2 + CoA. It participates in lipid metabolism; fatty acid biosynthesis. Catalyzes the condensation reaction of fatty acid synthesis by the addition to an acyl acceptor of two carbons from malonyl-ACP. Catalyzes the first condensation reaction which initiates fatty acid synthesis and may therefore play a role in governing the total rate of fatty acid production. Possesses both acetoacetyl-ACP synthase and acetyl transacylase activities. Its substrate specificity determines the biosynthesis of branched-chain and/or straight-chain of fatty acids. This chain is Beta-ketoacyl-[acyl-carrier-protein] synthase III, found in Variovorax paradoxus (strain S110).